Reading from the N-terminus, the 240-residue chain is tRNA (guanine-N(1)-)-methyltransferase (240 aa).

S-adenosyl-L-methionine-binding positions include Gly-110 and 130–135 (IGDYVL).

Belongs to the RNA methyltransferase TrmD family. As to quaternary structure, homodimer.

Its subcellular location is the cytoplasm. The catalysed reaction is guanosine(37) in tRNA + S-adenosyl-L-methionine = N(1)-methylguanosine(37) in tRNA + S-adenosyl-L-homocysteine + H(+). Specifically methylates guanosine-37 in various tRNAs. The sequence is that of tRNA (guanine-N(1)-)-methyltransferase from Macrococcus caseolyticus (strain JCSC5402) (Macrococcoides caseolyticum).